The sequence spans 471 residues: Glutamate--tRNA ligase (471 aa).

The short motif at 9–19 (PSPTGYLHVGG) is the 'HIGH' region element. Zn(2+)-binding residues include cysteine 98, cysteine 100, cysteine 125, and histidine 127. Positions 237-241 (KLSKR) match the 'KMSKS' region motif. Lysine 240 serves as a coordination point for ATP.

Belongs to the class-I aminoacyl-tRNA synthetase family. Glutamate--tRNA ligase type 1 subfamily. Monomer. Requires Zn(2+) as cofactor.

Its subcellular location is the cytoplasm. The catalysed reaction is tRNA(Glu) + L-glutamate + ATP = L-glutamyl-tRNA(Glu) + AMP + diphosphate. Its function is as follows. Catalyzes the attachment of glutamate to tRNA(Glu) in a two-step reaction: glutamate is first activated by ATP to form Glu-AMP and then transferred to the acceptor end of tRNA(Glu). The protein is Glutamate--tRNA ligase of Salmonella gallinarum (strain 287/91 / NCTC 13346).